A 207-amino-acid polypeptide reads, in one-letter code: Zinc finger protein JAGGED-like (207 aa).

Positions M1–D16 are enriched in low complexity. Positions M1 to R20 are disordered. The C2H2-type zinc finger occupies Y50 to H72.

As to expression, expressed in the emerging leaf, stamen and carpel primordia. Not expressed in the apical shoot meristem (SAM).

The protein localises to the nucleus. In terms of biological role, acts with JAG to promote growth and patterning in stamens and carpels. Promotes the growth of the abaxial and adaxial sides of floral organs. Promotes the growth of the pollen-bearing microsporangia in anthers, the carpel walls of the gynoecium and the establishment of the correct number of cell layers in carpel walls. Promotes leaf blade growth and trichome development. The sequence is that of Zinc finger protein JAGGED-like (JGL) from Arabidopsis thaliana (Mouse-ear cress).